Reading from the N-terminus, the 528-residue chain is Homoserine O-acetyltransferase (528 aa).

In terms of domain architecture, AB hydrolase-1 spans 60 to 245 (LVICHALTGS…AALLTYRSRD (186 aa)). Ser-154 serves as the catalytic Nucleophile. 2 disordered regions span residues 250–335 (RFGR…VKTQ) and 388–413 (DLSA…DATE). Polar residues predominate over residues 273 to 282 (QETTDPSVPS). Residues 295 to 304 (AWREHNDGHR) show a composition bias toward basic and acidic residues. Positions 389 to 409 (LSAPSRDTSLSSLSSGLPSSP) are enriched in low complexity. Catalysis depends on residues Asp-438 and His-467.

It belongs to the AB hydrolase superfamily. MetX family.

It localises to the cytoplasm. The catalysed reaction is L-homoserine + acetyl-CoA = O-acetyl-L-homoserine + CoA. It participates in amino-acid biosynthesis; L-methionine biosynthesis via de novo pathway; O-acetyl-L-homoserine from L-homoserine: step 1/1. Inhibited by 6-carbamoyl-3a,4,5,9b-tetrahydro-3H-cyclopenta[ c]quinoline-4-carboxylic acid (CTCQC). Its function is as follows. Commits homoserine to the methionine biosynthesis pathway by catalyzing its O-acetylation. In Cryptococcus neoformans var. grubii serotype A (strain H99 / ATCC 208821 / CBS 10515 / FGSC 9487) (Filobasidiella neoformans var. grubii), this protein is Homoserine O-acetyltransferase.